The following is a 135-amino-acid chain: Interleukin-4 (135 aa).

The first 24 residues, 1-24 (MGLTSQLIPALVCLLVCTSHFVHG), serve as a signal peptide directing secretion. 2 cysteine pairs are disulfide-bonded: Cys48–Cys85 and Cys70–Cys105. N-linked (GlcNAc...) asparagine glycans are attached at residues Asn62 and Asn96.

Belongs to the IL-4/IL-13 family.

It localises to the secreted. Participates in at least several B-cell activation processes as well as of other cell types. It is a costimulator of DNA-synthesis. It induces the expression of class II MHC molecules on resting B-cells. It enhances both secretion and cell surface expression of IgE and IgG1. It also regulates the expression of the low affinity Fc receptor for IgE (CD23) on both lymphocytes and monocytes. Positively regulates IL31RA expression in macrophages. Stimulates autophagy in dendritic cells by interfering with mTORC1 signaling and through the induction of RUFY4. The chain is Interleukin-4 (IL4) from Ovis aries (Sheep).